A 142-amino-acid polypeptide reads, in one-letter code: Large ribosomal subunit protein uL11 (142 aa).

Belongs to the universal ribosomal protein uL11 family. As to quaternary structure, part of the ribosomal stalk of the 50S ribosomal subunit. Interacts with L10 and the large rRNA to form the base of the stalk. L10 forms an elongated spine to which L12 dimers bind in a sequential fashion forming a multimeric L10(L12)X complex. Post-translationally, one or more lysine residues are methylated.

In terms of biological role, forms part of the ribosomal stalk which helps the ribosome interact with GTP-bound translation factors. The sequence is that of Large ribosomal subunit protein uL11 from Mycobacterium sp. (strain MCS).